The chain runs to 194 residues: Coiled-coil domain-containing protein 184 (194 aa).

Residues 39 to 68 (GMKELMEHLKAQLQALFEDVRAMRGALDEQ) are a coiled coil. Positions 101 to 176 (GLGVVGGKGS…LLGGDGPLVE (76 aa)) are disordered. Over residues 135–145 (PEDEEEEEEEK) the composition is skewed to acidic residues.

The polypeptide is Coiled-coil domain-containing protein 184 (CCDC184) (Homo sapiens (Human)).